We begin with the raw amino-acid sequence, 354 residues long: Dihydroorotate dehydrogenase (quinone) (354 aa).

FMN-binding positions include alanine 61–lysine 65 and alanine 85. A substrate-binding site is contributed by lysine 65. Asparagine 110 to phenylalanine 114 lines the substrate pocket. FMN contacts are provided by asparagine 139 and asparagine 170. Asparagine 170 provides a ligand contact to substrate. Catalysis depends on serine 173, which acts as the Nucleophile. Residue asparagine 175 participates in substrate binding. The FMN site is built by lysine 211 and threonine 239. Substrate is bound at residue asparagine 240–threonine 241. FMN is bound by residues glycine 261, glycine 290, and tyrosine 311–threonine 312.

The protein belongs to the dihydroorotate dehydrogenase family. Type 2 subfamily. Monomer. It depends on FMN as a cofactor.

The protein localises to the cell membrane. It carries out the reaction (S)-dihydroorotate + a quinone = orotate + a quinol. It functions in the pathway pyrimidine metabolism; UMP biosynthesis via de novo pathway; orotate from (S)-dihydroorotate (quinone route): step 1/1. Functionally, catalyzes the conversion of dihydroorotate to orotate with quinone as electron acceptor. The chain is Dihydroorotate dehydrogenase (quinone) from Cereibacter sphaeroides (strain ATCC 17023 / DSM 158 / JCM 6121 / CCUG 31486 / LMG 2827 / NBRC 12203 / NCIMB 8253 / ATH 2.4.1.) (Rhodobacter sphaeroides).